The primary structure comprises 1219 residues: FYVE, RhoGEF and PH domain-containing protein 5 (1219 aa).

Disordered stretches follow at residues 1-85 (MGSP…SCQI), 94-113 (EEDF…PTES), 201-227 (SDTQ…GQVP), and 310-367 (GRES…PSSV). The span at 23-50 (EVFEEDSADAAEGEDQIEQEEPPNCDEE) shows a compositional bias: acidic residues. The segment covering 201 to 214 (SDTQAASGTLSGYS) has biased composition (polar residues). Residues 319–337 (REPEGAGLDSHRVRRKEDN) show a composition bias toward basic and acidic residues. Residues 346 to 356 (SSGSFSQRSHL) are compositionally biased toward polar residues. The segment covering 357 to 367 (PSSGTSTPSSV) has biased composition (low complexity). At threonine 555 the chain carries Phosphothreonine. Positions 586-599 (ESKQQSSEQEAESA) are enriched in low complexity. The interval 586 to 644 (ESKQQSSEQEAESAYTEPYKVCPISAAPREDLTSDEEQGSSEEEDSASRDPSLSHKGEG) is disordered. Positions 618-630 (TSDEEQGSSEEED) are enriched in acidic residues. Residues 631-644 (SASRDPSLSHKGEG) show a composition bias toward basic and acidic residues. The DH domain maps to 647-840 (RALVIAQELL…SKVTDRANES (194 aa)). Residues 869–963 (EFLKEGTLMR…WHYCLSRALP (95 aa)) form the PH 1 domain. Residues 998–1057 (VTHAMMCMNCGCDFSLTVRRHHCHACGKIVCRNCSRNKYPLKCLKNRMAKVCDGCFRELK) form an FYVE-type zinc finger. The Zn(2+) site is built by cysteine 1004, cysteine 1007, cysteine 1020, cysteine 1023, cysteine 1028, cysteine 1031, cysteine 1049, and cysteine 1052. The PH 2 domain maps to 1120–1218 (GSAISGYLSR…WMEAMEDASV (99 aa)).

In terms of tissue distribution, expressed in highly vascularized tissues, such as lung, kidney and ovary.

Its subcellular location is the cytoplasm. The protein resides in the cytoskeleton. It is found in the cell projection. It localises to the ruffle membrane. The protein localises to the endoplasmic reticulum. Its subcellular location is the golgi apparatus. The protein resides in the early endosome. Functionally, activates CDC42, a member of the Ras-like family of Rho- and Rac proteins, by exchanging bound GDP for free GTP. Mediates VEGF-induced CDC42 activation. May regulate proangiogenic action of VEGF in vascular endothelial cells, including network formation, directional movement and proliferation. May play a role in regulating the actin cytoskeleton and cell shape. This chain is FYVE, RhoGEF and PH domain-containing protein 5 (Fgd5), found in Mus musculus (Mouse).